The following is an 89-amino-acid chain: MVLLAENKDEMIANFKLHDSDTGSPEVQVALLTHRISYLTEHVKVHKKDHHSRRGLLILVGRRRSLLDYLRKKDIERYRSLIERLGLRR.

Belongs to the universal ribosomal protein uS15 family. As to quaternary structure, part of the 30S ribosomal subunit. Forms a bridge to the 50S subunit in the 70S ribosome, contacting the 23S rRNA.

Functionally, one of the primary rRNA binding proteins, it binds directly to 16S rRNA where it helps nucleate assembly of the platform of the 30S subunit by binding and bridging several RNA helices of the 16S rRNA. In terms of biological role, forms an intersubunit bridge (bridge B4) with the 23S rRNA of the 50S subunit in the ribosome. The sequence is that of Small ribosomal subunit protein uS15 from Desulforapulum autotrophicum (strain ATCC 43914 / DSM 3382 / VKM B-1955 / HRM2) (Desulfobacterium autotrophicum).